A 284-amino-acid chain; its full sequence is D-tagatose-1,6-bisphosphate aldolase subunit GatY (284 aa).

Asp82 acts as the Proton donor in catalysis. 2 residues coordinate Zn(2+): His83 and His180. Gly181 provides a ligand contact to dihydroxyacetone phosphate. Zn(2+) is bound at residue His208. Dihydroxyacetone phosphate is bound by residues 209–211 (GAS) and 230–233 (NVAT).

It belongs to the class II fructose-bisphosphate aldolase family. TagBP aldolase GatY subfamily. As to quaternary structure, forms a complex with GatZ. It depends on Zn(2+) as a cofactor.

It carries out the reaction D-tagatofuranose 1,6-bisphosphate = D-glyceraldehyde 3-phosphate + dihydroxyacetone phosphate. It functions in the pathway carbohydrate metabolism; D-tagatose 6-phosphate degradation; D-glyceraldehyde 3-phosphate and glycerone phosphate from D-tagatose 6-phosphate: step 2/2. Catalytic subunit of the tagatose-1,6-bisphosphate aldolase GatYZ, which catalyzes the reversible aldol condensation of dihydroxyacetone phosphate (DHAP or glycerone-phosphate) with glyceraldehyde 3-phosphate (G3P) to produce tagatose 1,6-bisphosphate (TBP). Requires GatZ subunit for full activity and stability. Is involved in the catabolism of galactitol. In Escherichia coli O8 (strain IAI1), this protein is D-tagatose-1,6-bisphosphate aldolase subunit GatY.